The chain runs to 501 residues: Aldehyde dehydrogenase mpl4 (501 aa).

231 to 236 is an NAD(+) binding site; sequence GSTASG. Catalysis depends on residues Glu253 and Cys287.

This sequence belongs to the aldehyde dehydrogenase family.

The enzyme catalyses an aldehyde + NAD(+) + H2O = a carboxylate + NADH + 2 H(+). The protein operates within mycotoxin biosynthesis. Functionally, aldehyde dehydrogenase; part of the gene cluster that mediates the biosynthesis of the mycotoxin citrinin, a hepato-nephrotoxic compound to humans due to inhibition of respiration complex III. The pathway begins with the synthesis of a keto-aldehyde intermediate by the citrinin PKS (pksCT) from successive condensations of 4 malonyl-CoA units, presumably with a simple acetyl-CoA starter unit. Release of the keto-aldehyde intermediate is consistent with the presence of the C-terminal reductive release domain. Mp11 collaborates with pksCT by catalyzing the hydrolysis of ACP-bound acyl intermediates to free the ACP from stalled intermediates. Mpl2 then catalyzes the oxidation of the C-12 methyl of the ketone intermediate to an alcohol intermediate which is further oxidized by the oxidoreductase mpl7 to produce a bisaldehyde intermediate. The fourth catalytic step is catalyzed by the mpl4 aldehyde dehydrogenase. The final transformation is the reduction of C-3 by mpl6 to provide the chemically stable citrinin nucleus. The chain is Aldehyde dehydrogenase mpl4 from Monascus purpureus (Red mold).